The sequence spans 252 residues: Curing of [URE3] protein 1 (252 aa).

The protein resides in the nucleus. In terms of biological role, involved in the curing of prion [URE3]. Nuclear localization of this protein may suggest a role in transcription regulation, so it might exert an effect on [URE3] through known prion-curing chaperones or BTN2. The polypeptide is Curing of [URE3] protein 1 (CUR1) (Saccharomyces cerevisiae (strain ATCC 204508 / S288c) (Baker's yeast)).